The chain runs to 491 residues: Katanin p60 ATPase-containing subunit A1 (491 aa).

Positions 1 to 29 (MSLLMISENVKLAREYALLGNYDSAMVYY) are interaction with KATNB1. An interaction with dynein and NDEL1 region spans residues 1 to 75 (MSLLMISENV…VKDIMKTLES (75 aa)). The interval 1–185 (MSLLMISENV…EPETNKFDST (185 aa)) is interaction with microtubules. Residues Ser-42 and Ser-109 each carry the phosphoserine; by DYRK2 modification. The disordered stretch occupies residues 87 to 185 (QHDLPASEGE…EPETNKFDST (99 aa)). A compositionally biased stretch (polar residues) spans 117-144 (SSQYSDPKSHGNRPSTTVRVHRSSAQNV). Phosphothreonine; by DYRK2 is present on Thr-133. The span at 145–169 (HNDRGKAVRCREKKEQNKGREEKNK) shows a compositional bias: basic and acidic residues. A Phosphoserine modification is found at Ser-170. 249 to 256 (GPPGTGKT) provides a ligand contact to ATP.

It belongs to the AAA ATPase family. Katanin p60 subunit A1 subfamily. In terms of assembly, can homooligomerize into hexameric rings, which may be promoted by interaction with microtubules. Interacts with KATNB1, which may serve as a targeting subunit. Interacts with ASPM; the katanin complex formation KATNA1:KATNB1 is required for the association of ASPM. Interacts with dynein and NDEL1. Associates with the E3 ligase complex containing DYRK2, EDD/UBR5, DDB1 and DCAF1 proteins (EDVP complex). Interacts with KLHL42 (via the kelch domains). Interacts with CUL3; the interaction is enhanced by KLHL42. Interacts with KATNB1 and KATNBL1. Interacts with CAMSAP2 and CAMSAP3; leading to regulate the length of CAMSAP-decorated microtubule stretches. In terms of processing, phosphorylation by DYRK2 triggers ubiquitination and subsequent degradation. Post-translationally, ubiquitinated by the BCR(KLHL42) E3 ubiquitin ligase complex, leading to its proteasomal degradation. Ubiquitinated by the EDVP E3 ligase complex and subsequently targeted for proteasomal degradation.

The protein resides in the cytoplasm. It localises to the midbody. Its subcellular location is the cytoskeleton. It is found in the microtubule organizing center. The protein localises to the centrosome. The protein resides in the spindle pole. It localises to the spindle. The catalysed reaction is n ATP + n H2O + a microtubule = n ADP + n phosphate + (n+1) alpha/beta tubulin heterodimers.. With respect to regulation, ATPase activity is stimulated by microtubules, which promote homooligomerization. ATP-dependent microtubule severing is stimulated by interaction with KATNB1. Catalytic subunit of a complex which severs microtubules in an ATP-dependent manner. Microtubule severing may promote rapid reorganization of cellular microtubule arrays and the release of microtubules from the centrosome following nucleation. Microtubule release from the mitotic spindle poles may allow depolymerization of the microtubule end proximal to the spindle pole, leading to poleward microtubule flux and poleward motion of chromosome. Microtubule release within the cell body of neurons may be required for their transport into neuronal processes by microtubule-dependent motor proteins. This transport is required for axonal growth. The chain is Katanin p60 ATPase-containing subunit A1 from Homo sapiens (Human).